Here is a 153-residue protein sequence, read N- to C-terminus: UPF0756 membrane protein LSEI_1366 (153 aa).

A run of 4 helical transmembrane segments spans residues 4-24 (WLFLLGILAIAIVGKNKSLII), 52-72 (WGVTVISAAIMVPIATGEIGF), 85-105 (WIAIGCGVLVAVLSAKGVGLL), and 115-135 (LVFGTIIGVVFLKGIAAGPVI).

Belongs to the UPF0756 family.

It is found in the cell membrane. The protein is UPF0756 membrane protein LSEI_1366 of Lacticaseibacillus paracasei (strain ATCC 334 / BCRC 17002 / CCUG 31169 / CIP 107868 / KCTC 3260 / NRRL B-441) (Lactobacillus paracasei).